We begin with the raw amino-acid sequence, 228 residues long: Imidazole glycerol phosphate synthase subunit HisH (228 aa).

The Glutamine amidotransferase type-1 domain maps to 4-218; the sequence is DIAVVDYGMG…VTWNPGEHAS (215 aa). Residue cysteine 83 is the Nucleophile of the active site. Residues histidine 193 and glutamate 195 contribute to the active site.

Heterodimer of HisH and HisF.

The protein resides in the cytoplasm. The enzyme catalyses 5-[(5-phospho-1-deoxy-D-ribulos-1-ylimino)methylamino]-1-(5-phospho-beta-D-ribosyl)imidazole-4-carboxamide + L-glutamine = D-erythro-1-(imidazol-4-yl)glycerol 3-phosphate + 5-amino-1-(5-phospho-beta-D-ribosyl)imidazole-4-carboxamide + L-glutamate + H(+). It carries out the reaction L-glutamine + H2O = L-glutamate + NH4(+). It participates in amino-acid biosynthesis; L-histidine biosynthesis; L-histidine from 5-phospho-alpha-D-ribose 1-diphosphate: step 5/9. In terms of biological role, IGPS catalyzes the conversion of PRFAR and glutamine to IGP, AICAR and glutamate. The HisH subunit catalyzes the hydrolysis of glutamine to glutamate and ammonia as part of the synthesis of IGP and AICAR. The resulting ammonia molecule is channeled to the active site of HisF. This is Imidazole glycerol phosphate synthase subunit HisH from Thiobacillus denitrificans (strain ATCC 25259 / T1).